A 127-amino-acid polypeptide reads, in one-letter code: QFAKPEDAVKYRQSALTLMASHFGRMTPVVKGQAPYDAAQIKANVEVLKTLSALPWAAFGPGTEGGDARPEIWSDAASFKQKQQAFQDNIVKLSAAADAGDLDKLRAAFGDVGASCKACHDAYRKKK.

Position 1 is a pyrrolidone carboxylic acid (Q1). Heme c-binding residues include R12, Q13, D67, C116, C119, and H120.

As to quaternary structure, homodimer. Binds 1 heme c group covalently per subunit.

It localises to the periplasm. Functionally, cytochrome c' is the most widely occurring bacterial c-type cytochrome. Cytochromes c' are high-spin proteins and the heme has no sixth ligand. Their exact function is not known. The protein is Cytochrome c' of Alcaligenes xylosoxydans xylosoxydans (Achromobacter xylosoxidans).